The following is a 57-amino-acid chain: Large ribosomal subunit protein bL33 (57 aa).

The protein belongs to the bacterial ribosomal protein bL33 family.

This chain is Large ribosomal subunit protein bL33, found in Shewanella amazonensis (strain ATCC BAA-1098 / SB2B).